A 704-amino-acid chain; its full sequence is CAP-Gly domain-containing linker protein 4 (704 aa).

ANK repeat units lie at residues 65-101 (TSVSELFAILRQWVPQVQQNIDIIGNEILKRGCNVND), 149-180 (TNMNALHYASYFDVPELIRVILKTSKPKDVDA), and 186-215 (NFGTALHIAAHNLCAGAVKTLLELGANPAF). Residues 303-345 (GTTEFASGQWAGIELDEPEGKNNGSVGRVQYFKCAPKYGIFAP) enclose the CAP-Gly 1 domain. The disordered stretch occupies residues 353–479 (KDGRKTTTHT…SATSAANNSH (127 aa)). 3 stretches are compositionally biased toward low complexity: residues 360–371 (THTPSTRATPHA), 423–432 (SMSSSSSSSS), and 440–461 (PKKLTTSSGGKKTLSKSPSLPS). A CAP-Gly 2 domain is found at 504 to 546 (GTTNFAPGYWYGIELEKPHGKNDGSVGGVQYFSCSPRYGIFAP). Residues serine 556 and serine 608 each carry the phosphoserine modification. Positions 643-685 (GPTDFASGIWLGLELRSAKGKNDGAVGDKRYFTCKPNYGVLVR) constitute a CAP-Gly 3 domain.

In Mus musculus (Mouse), this protein is CAP-Gly domain-containing linker protein 4 (Clip4).